The sequence spans 545 residues: Methionine--tRNA ligase (545 aa).

The 'HIGH' region motif lies at 10–20 (PYANGSLHIGH). Zn(2+) is bound by residues cysteine 141, cysteine 144, cysteine 153, and cysteine 156. Positions 329 to 333 (KISTS) match the 'KMSKS' region motif. Threonine 332 lines the ATP pocket.

It belongs to the class-I aminoacyl-tRNA synthetase family. MetG type 1 subfamily. As to quaternary structure, monomer. It depends on Zn(2+) as a cofactor.

It localises to the cytoplasm. It carries out the reaction tRNA(Met) + L-methionine + ATP = L-methionyl-tRNA(Met) + AMP + diphosphate. Functionally, is required not only for elongation of protein synthesis but also for the initiation of all mRNA translation through initiator tRNA(fMet) aminoacylation. The polypeptide is Methionine--tRNA ligase (Streptococcus pneumoniae (strain 70585)).